The following is a 449-amino-acid chain: Uridine-cytidine kinase C (449 aa).

58 to 65 (GPSGAGKT) contacts ATP. One can recognise a CYTH domain in the interval 235 to 401 (NPIYILKSVK…QKSYIELYQD (167 aa)).

Belongs to the uridine kinase family.

The enzyme catalyses uridine + ATP = UMP + ADP + H(+). The catalysed reaction is cytidine + ATP = CMP + ADP + H(+). It participates in pyrimidine metabolism; CTP biosynthesis via salvage pathway; CTP from cytidine: step 1/3. It functions in the pathway pyrimidine metabolism; UMP biosynthesis via salvage pathway; UMP from uridine: step 1/1. Catalyzes the conversion of uridine into uridine monophosphate and cytidine into cytidine monophosphate in the pyrimidine salvage pathway. This chain is Uridine-cytidine kinase C (udkC), found in Dictyostelium discoideum (Social amoeba).